The chain runs to 72 residues: Small ribosomal subunit protein bS20 (72 aa).

It belongs to the bacterial ribosomal protein bS20 family.

In terms of biological role, binds directly to 16S ribosomal RNA. The chain is Small ribosomal subunit protein bS20 (rpsT) from Klebsiella pneumoniae.